The primary structure comprises 109 residues: Histidine-rich carboxyl terminus protein 1 (109 aa).

A helical transmembrane segment spans residues 13-33; that stretch reads WITGTALAFLMLLWLMALCLF. The tract at residues 77–109 is disordered; it reads TSVGVHHHHHHSPHRLHHHKHHHRHHHAHGARR. Over residues 81–109 the composition is skewed to basic residues; it reads VHHHHHHSPHRLHHHKHHHRHHHAHGARR.

Its subcellular location is the membrane. This Mus musculus (Mouse) protein is Histidine-rich carboxyl terminus protein 1 (Hrct1).